The sequence spans 442 residues: Adenylosuccinate synthetase (442 aa).

GTP-binding positions include 16–22 and 44–46; these read GDEGKGK and GHT. Asp17 serves as the catalytic Proton acceptor. Residues Asp17 and Gly44 each contribute to the Mg(2+) site. IMP-binding positions include 17–20, 42–45, Thr133, Arg147, Gln228, Thr243, and Arg307; these read DEGK and NAGH. The active-site Proton donor is the His45. Substrate is bound at residue 303–309; that stretch reads AVTGRPR. GTP contacts are provided by residues Arg309, 335–337, and 417–419; these read KLD and STG.

This sequence belongs to the adenylosuccinate synthetase family. As to quaternary structure, homodimer. Mg(2+) is required as a cofactor.

The protein resides in the cytoplasm. The catalysed reaction is IMP + L-aspartate + GTP = N(6)-(1,2-dicarboxyethyl)-AMP + GDP + phosphate + 2 H(+). Its pathway is purine metabolism; AMP biosynthesis via de novo pathway; AMP from IMP: step 1/2. Plays an important role in the de novo pathway of purine nucleotide biosynthesis. Catalyzes the first committed step in the biosynthesis of AMP from IMP. The protein is Adenylosuccinate synthetase of Koribacter versatilis (strain Ellin345).